A 287-amino-acid polypeptide reads, in one-letter code: Nucleotide-binding protein Dtpsy_0831 (287 aa).

10–17 is an ATP binding site; the sequence is GMSGSGKS. 59 to 62 contacts GTP; that stretch reads DVRS.

This sequence belongs to the RapZ-like family.

Its function is as follows. Displays ATPase and GTPase activities. In Acidovorax ebreus (strain TPSY) (Diaphorobacter sp. (strain TPSY)), this protein is Nucleotide-binding protein Dtpsy_0831.